A 783-amino-acid polypeptide reads, in one-letter code: Polyribonucleotide nucleotidyltransferase 1, mitochondrial (783 aa).

The N-terminal 46 residues, 1-46 (MAACRYCCSCLRLRPLSDGPFCLPGRDRALTQLLVRALWSSTGSRA), are a transit peptide targeting the mitochondrion. Lys250, Lys264, Lys285, and Lys289 each carry N6-acetyllysine. Lys552 bears the N6-succinyllysine mark. Residues 605 to 664 (PVVETVQVPLSKRAKFVGPGGYNLKKLQAETGVTISQVDEETFSVFAPTPSALHEARDFI) enclose the KH domain. One can recognise an S1 motif domain in the interval 679-750 (GAVYTATITE…ADGRMRLSRK (72 aa)). 2 positions are modified to phosphoserine: Ser754 and Ser782.

This sequence belongs to the polyribonucleotide nucleotidyltransferase family. In terms of assembly, homotrimer; in free form. Homooligomer. Component of the mitochondrial degradosome (mtEXO) complex which is a heteropentamer containing 2 copies of SUPV3L1 and 3 copies of PNPT1. As part of the mitochondrial degradosome complex, interacts with GRSF1 in an RNA-dependent manner; the interaction enhances the activity of the complex. Interacts with TCL1A; the interaction has no effect on PNPT1 exonuclease activity.

The protein localises to the cytoplasm. It localises to the mitochondrion matrix. The protein resides in the mitochondrion intermembrane space. The catalysed reaction is RNA(n+1) + phosphate = RNA(n) + a ribonucleoside 5'-diphosphate. Its function is as follows. RNA-binding protein implicated in numerous RNA metabolic processes. Catalyzes the phosphorolysis of single-stranded polyribonucleotides processively in the 3'-to-5' direction. Mitochondrial intermembrane factor with RNA-processing exoribonulease activity. Component of the mitochondrial degradosome (mtEXO) complex, that degrades 3' overhang double-stranded RNA with a 3'-to-5' directionality in an ATP-dependent manner. Involved in the degradation of non-coding mitochondrial transcripts (MT-ncRNA) and tRNA-like molecules. Required for correct processing and polyadenylation of mitochondrial mRNAs. Plays a role as a cytoplasmic RNA import factor that mediates the translocation of small RNA components like the 5S RNA, the RNA subunit of ribonuclease P and the mitochondrial RNA-processing (MRP) RNA, into the mitochondrial matrix. Plays a role in mitochondrial morphogenesis and respiration; regulates the expression of the electron transport chain (ETC) components at the mRNA and protein levels. In the cytoplasm, shows a 3'-to-5' exoribonuclease mediating mRNA degradation activity; degrades c-myc mRNA upon treatment with IFNB1/IFN-beta, resulting in a growth arrest in melanoma cells. Regulates the stability of specific mature miRNAs in melanoma cells; specifically and selectively degrades miR-221, preferentially. Also plays a role in RNA cell surveillance by cleaning up oxidized RNAs. Binds to the RNA subunit of ribonuclease P, MRP RNA and miR-221 microRNA. This Pongo abelii (Sumatran orangutan) protein is Polyribonucleotide nucleotidyltransferase 1, mitochondrial (PNPT1).